The primary structure comprises 427 residues: Phosphatidate cytidylyltransferase, mitochondrial (427 aa).

A compositionally biased stretch (polar residues) spans 94-106 (YNRNGDGSTSTEN). Residues 94-113 (YNRNGDGSTSTENPSKKEEQ) are disordered.

The protein belongs to the TAM41 family. Mg(2+) is required as a cofactor.

It is found in the mitochondrion inner membrane. The catalysed reaction is a 1,2-diacyl-sn-glycero-3-phosphate + CTP + H(+) = a CDP-1,2-diacyl-sn-glycerol + diphosphate. It participates in phospholipid metabolism; CDP-diacylglycerol biosynthesis; CDP-diacylglycerol from sn-glycerol 3-phosphate: step 3/3. In terms of biological role, catalyzes the formation of CDP-diacylglycerol (CDP-DAG) from phosphatidic acid (PA) in the mitochondrial inner membrane. Required for the biosynthesis of the dimeric phospholipid cardiolipin, which stabilizes supercomplexes of the mitochondrial respiratory chain in the mitochondrial inner membrane. In Dictyostelium discoideum (Social amoeba), this protein is Phosphatidate cytidylyltransferase, mitochondrial.